The primary structure comprises 262 residues: Thiazole synthase (262 aa).

K96 functions as the Schiff-base intermediate with DXP in the catalytic mechanism. 1-deoxy-D-xylulose 5-phosphate-binding positions include G157, 184–185 (AG), and 206–207 (NT).

The protein belongs to the ThiG family. As to quaternary structure, homotetramer. Forms heterodimers with either ThiH or ThiS.

The protein localises to the cytoplasm. The enzyme catalyses [ThiS sulfur-carrier protein]-C-terminal-Gly-aminoethanethioate + 2-iminoacetate + 1-deoxy-D-xylulose 5-phosphate = [ThiS sulfur-carrier protein]-C-terminal Gly-Gly + 2-[(2R,5Z)-2-carboxy-4-methylthiazol-5(2H)-ylidene]ethyl phosphate + 2 H2O + H(+). Its pathway is cofactor biosynthesis; thiamine diphosphate biosynthesis. Its function is as follows. Catalyzes the rearrangement of 1-deoxy-D-xylulose 5-phosphate (DXP) to produce the thiazole phosphate moiety of thiamine. Sulfur is provided by the thiocarboxylate moiety of the carrier protein ThiS. In vitro, sulfur can be provided by H(2)S. The sequence is that of Thiazole synthase from Legionella pneumophila (strain Paris).